The sequence spans 874 residues: Valine--tRNA ligase (874 aa).

The short motif at P51–H61 is the 'HIGH' region element. A 'KMSKS' region motif is present at residues K533–S537. An ATP-binding site is contributed by K536. Positions L813–Q873 form a coiled coil.

The protein belongs to the class-I aminoacyl-tRNA synthetase family. ValS type 1 subfamily. In terms of assembly, monomer.

The protein localises to the cytoplasm. It catalyses the reaction tRNA(Val) + L-valine + ATP = L-valyl-tRNA(Val) + AMP + diphosphate. Its function is as follows. Catalyzes the attachment of valine to tRNA(Val). As ValRS can inadvertently accommodate and process structurally similar amino acids such as threonine, to avoid such errors, it has a 'posttransfer' editing activity that hydrolyzes mischarged Thr-tRNA(Val) in a tRNA-dependent manner. This is Valine--tRNA ligase from Helicobacter pylori (strain ATCC 700392 / 26695) (Campylobacter pylori).